Reading from the N-terminus, the 1066-residue chain is Allene oxide synthase-lipoxygenase protein (1066 aa).

The segment at 1-371 is allene oxide synthase; that stretch reads MTWKNFGFEI…LKIGSLVPAG (371 aa). Tyr-353 provides a ligand contact to heme. An arachidonate 8-lipoxygenase region spans residues 372–1066; the sequence is QNAIYNVEVE…PERIPNGTAI (695 aa). A PLAT domain is found at 374 to 490; it reads AIYNVEVETG…KDMVLFPGEA (117 aa). Positions 387, 389, 390, 391, 416, 417, 419, 452, and 454 each coordinate Ca(2+). The Lipoxygenase domain maps to 491-1066; sequence TLPFNEVPAI…PERIPNGTAI (576 aa). Residues His-757, His-762, His-943, Asn-947, and Ile-1066 each coordinate Fe cation.

The protein in the C-terminal section; belongs to the lipoxygenase family. As to quaternary structure, dimer. Ca(2+) is required as a cofactor. The cofactor is Fe cation. Heme serves as cofactor.

It is found in the cytoplasm. It localises to the membrane. The enzyme catalyses (5Z,8Z,11Z,14Z)-eicosatetraenoate + O2 = (8R)-hydroperoxy-(5Z,9E,11Z,14Z)-eicosatetraenoate. The catalysed reaction is (8R)-hydroperoxy-(5Z,9E,11Z,14Z)-eicosatetraenoate = 8,9-epoxy-(5Z,9E,11Z,14Z)-eicosatetraenoate + H2O. It catalyses the reaction (5Z,8Z,11Z,14Z,17Z)-eicosapentaenoate + O2 = (8R)-hydroperoxy-(5Z,9E,11Z,14Z,17Z)-eicosapentaenoate. It carries out the reaction (4Z,7Z,10Z,13Z,16Z,19Z)-docosahexaenoate + O2 = 10-hydroperoxy-(4Z,7Z,11E,13Z,16Z,19Z)-docosahexaenoate. The enzyme catalyses (8Z,11Z,14Z)-eicosatrienoate + O2 = (8R)-hydroperoxy-(9E,11Z,14Z)-eicosatrienoate. The catalysed reaction is (8Z,11Z,14Z)-eicosatrienoate + O2 = 10-hydroperoxy-(8Z,11Z,14Z)-eicosatrienoate. It catalyses the reaction (8Z,11Z,14Z)-eicosatrienoate + O2 = 11-hydroperoxy-(8Z,12E,14Z)-eicosatrienoate. It functions in the pathway lipid metabolism; arachidonate metabolism. Its pathway is lipid metabolism; fatty acid metabolism. With respect to regulation, lipoxygenase activity is stimulated by calcium, sodium, lithium and potassium ions. Calcium binding promotes interaction with membranes and thus facilitates access to substrates. Its function is as follows. Bifunctional enzyme which is responsible for allene oxide biosynthesis via a two-step reaction; first the lipoxygenase reaction that converts polyunsaturated fatty acids such as arachidonate ((5Z,8Z,11Z,14Z)-eicosatetraenoate) into a (8R)-hydroperoxide intermediate ((8R)-hydroperoxy-(5Z,9E,11Z,14Z)-eicosatetraenoate) followed by the allene oxide synthase reaction that converts the hydroperoxide intermediate ((8R)-hydroperoxy-(5Z,9E,11Z,14Z)-eicosatetraenoate) into the allene oxide (8,9-epoxy-(5Z,9E,11Z,14Z)-eicosatetraenoate). Shows preference for C20 or C22 highly polyunsaturated fatty acids and no activity with C18 fatty acids in vitro. Fatty acid allene oxides are intermediates in the formation of cyclopentenones or hydrolytic products in marine systems, most notably the prostanoid-related clavulones. The chain is Allene oxide synthase-lipoxygenase protein from Plexaura homomalla (Black sea rod).